We begin with the raw amino-acid sequence, 46 residues long: Homeobox protein Hox-D4 (46 aa).

The homeobox DNA-binding region spans 1-46 (VNSNYTGGEPKRSRTAYTRQQVLELEKEFLFNRYLTRRRRIQHTLT).

The protein belongs to the Antp homeobox family. Deformed subfamily. In terms of assembly, forms a DNA-binding heterodimer with transcription factor PBX1.

Its subcellular location is the nucleus. In terms of biological role, sequence-specific transcription factor which is part of a developmental regulatory system that provides cells with specific positional identities on the anterior-posterior axis. The protein is Homeobox protein Hox-D4 (HOXD4) of Ovis aries (Sheep).